The sequence spans 133 residues: S-protein homolog 9 (133 aa).

Positions 1 to 20 are cleaved as a signal peptide; it reads MNRLSCFLLVIGLCIGLSNA.

This sequence belongs to the plant self-incompatibility (S1) protein family.

The protein localises to the secreted. The polypeptide is S-protein homolog 9 (Arabidopsis thaliana (Mouse-ear cress)).